The primary structure comprises 244 residues: Ribosomal RNA large subunit methyltransferase E (244 aa).

Glycine 81, tryptophan 83, aspartate 109, aspartate 125, and aspartate 149 together coordinate S-adenosyl-L-methionine. The active-site Proton acceptor is lysine 189.

The protein belongs to the class I-like SAM-binding methyltransferase superfamily. RNA methyltransferase RlmE family.

Its subcellular location is the cytoplasm. It carries out the reaction uridine(2552) in 23S rRNA + S-adenosyl-L-methionine = 2'-O-methyluridine(2552) in 23S rRNA + S-adenosyl-L-homocysteine + H(+). Its function is as follows. Specifically methylates the uridine in position 2552 of 23S rRNA at the 2'-O position of the ribose in the fully assembled 50S ribosomal subunit. The sequence is that of Ribosomal RNA large subunit methyltransferase E from Cereibacter sphaeroides (strain ATCC 17029 / ATH 2.4.9) (Rhodobacter sphaeroides).